We begin with the raw amino-acid sequence, 583 residues long: ATP-dependent lipid A-core flippase (583 aa).

A run of 6 helical transmembrane segments spans residues 32-52 (VAFL…TGFL), 71-91 (LHLL…AGFI), 115-135 (LMSL…TSKL), 160-180 (ILGM…IFAV), 259-279 (SMVV…YAVG), and 286-306 (FAAF…LTSL). The ABC transmembrane type-1 domain maps to 34-312 (FLISIIALVT…LTSLNEELQV (279 aa)). The region spanning 344–580 (IVFENVTLQY…DGHYAKLYRK (237 aa)) is the ABC transporter domain. 378–385 (GRSGGGKT) provides a ligand contact to ATP.

The protein belongs to the ABC transporter superfamily. Lipid exporter (TC 3.A.1.106) family. As to quaternary structure, homodimer.

Its subcellular location is the cell inner membrane. It carries out the reaction ATP + H2O + lipid A-core oligosaccharideSide 1 = ADP + phosphate + lipid A-core oligosaccharideSide 2.. Functionally, involved in lipopolysaccharide (LPS) biosynthesis. Translocates lipid A-core from the inner to the outer leaflet of the inner membrane. Transmembrane domains (TMD) form a pore in the inner membrane and the ATP-binding domain (NBD) is responsible for energy generation. The protein is ATP-dependent lipid A-core flippase of Methylobacillus flagellatus (strain ATCC 51484 / DSM 6875 / VKM B-1610 / KT).